The sequence spans 116 residues: Iron-sulfur cluster insertion protein ErpA (116 aa).

Cysteine 44, cysteine 108, and cysteine 110 together coordinate iron-sulfur cluster.

This sequence belongs to the HesB/IscA family. As to quaternary structure, homodimer. Iron-sulfur cluster serves as cofactor.

Its function is as follows. Required for insertion of 4Fe-4S clusters for at least IspG. The chain is Iron-sulfur cluster insertion protein ErpA from Shewanella sp. (strain ANA-3).